A 243-amino-acid chain; its full sequence is Probable transcriptional regulatory protein Athe_0816 (243 aa).

This sequence belongs to the TACO1 family.

It is found in the cytoplasm. The sequence is that of Probable transcriptional regulatory protein Athe_0816 from Caldicellulosiruptor bescii (strain ATCC BAA-1888 / DSM 6725 / KCTC 15123 / Z-1320) (Anaerocellum thermophilum).